Consider the following 289-residue polypeptide: Phytoene synthase (289 aa).

It belongs to the phytoene/squalene synthase family. It depends on ATP as a cofactor. The cofactor is Mn(2+). Mg(2+) is required as a cofactor.

It functions in the pathway carotenoid biosynthesis; phytoene biosynthesis. Its function is as follows. Involved in the biosynthesis of carotenoids. Catalyzes the condensation of two molecules of geranylgeranyl diphosphate (GGPP) to give prephytoene diphosphate (PPPP) and the subsequent rearrangement of the cyclopropylcarbinyl intermediate to yield phytoene. In Thermus thermophilus (strain ATCC BAA-163 / DSM 7039 / HB27), this protein is Phytoene synthase (crtB).